The chain runs to 544 residues: Probable protein kinase UbiB (544 aa).

Residues 123 to 501 (DFDIKPLASA…KRQQGTGKFL (379 aa)) enclose the Protein kinase domain. ATP is bound by residues 129–137 (LASASIAQV) and lysine 152. Aspartate 287 acts as the Proton acceptor in catalysis. The next 2 membrane-spanning stretches (helical) occupy residues 496–516 (GTGK…AIWI) and 519–539 (QLEP…LLSW).

Belongs to the ABC1 family. UbiB subfamily.

It is found in the cell inner membrane. The protein operates within cofactor biosynthesis; ubiquinone biosynthesis [regulation]. Is probably a protein kinase regulator of UbiI activity which is involved in aerobic coenzyme Q (ubiquinone) biosynthesis. The sequence is that of Probable protein kinase UbiB from Vibrio cholerae serotype O1 (strain ATCC 39541 / Classical Ogawa 395 / O395).